A 398-amino-acid chain; its full sequence is Tyrosine--tRNA ligase (398 aa).

Residues 48-57 (PTGADIHLGH) carry the 'HIGH' region motif. Positions 235 to 239 (KMSKS) match the 'KMSKS' region motif. An ATP-binding site is contributed by K238. One can recognise an S4 RNA-binding domain in the interval 334-398 (VKLAYLLGAT…GKNKFMRLVP (65 aa)).

This sequence belongs to the class-I aminoacyl-tRNA synthetase family. TyrS type 2 subfamily. Homodimer.

Its subcellular location is the cytoplasm. The catalysed reaction is tRNA(Tyr) + L-tyrosine + ATP = L-tyrosyl-tRNA(Tyr) + AMP + diphosphate + H(+). Catalyzes the attachment of tyrosine to tRNA(Tyr) in a two-step reaction: tyrosine is first activated by ATP to form Tyr-AMP and then transferred to the acceptor end of tRNA(Tyr). This is Tyrosine--tRNA ligase from Nostoc sp. (strain PCC 7120 / SAG 25.82 / UTEX 2576).